The chain runs to 329 residues: Phenylalanine--tRNA ligase alpha subunit (329 aa).

Belongs to the class-II aminoacyl-tRNA synthetase family. Phe-tRNA synthetase alpha subunit type 1 subfamily. As to quaternary structure, tetramer of two alpha and two beta subunits. Mg(2+) serves as cofactor.

It is found in the cytoplasm. The catalysed reaction is tRNA(Phe) + L-phenylalanine + ATP = L-phenylalanyl-tRNA(Phe) + AMP + diphosphate + H(+). The sequence is that of Phenylalanine--tRNA ligase alpha subunit (pheS) from Buchnera aphidicola subsp. Schizaphis graminum (strain Sg).